A 383-amino-acid polypeptide reads, in one-letter code: Lipid-A-disaccharide synthase (383 aa).

It belongs to the LpxB family.

It catalyses the reaction a lipid X + a UDP-2-N,3-O-bis[(3R)-3-hydroxyacyl]-alpha-D-glucosamine = a lipid A disaccharide + UDP + H(+). The protein operates within bacterial outer membrane biogenesis; LPS lipid A biosynthesis. Its function is as follows. Condensation of UDP-2,3-diacylglucosamine and 2,3-diacylglucosamine-1-phosphate to form lipid A disaccharide, a precursor of lipid A, a phosphorylated glycolipid that anchors the lipopolysaccharide to the outer membrane of the cell. This is Lipid-A-disaccharide synthase from Anaeromyxobacter dehalogenans (strain 2CP-C).